Reading from the N-terminus, the 596-residue chain is Thioredoxin reductase 1, mitochondrial (596 aa).

Positions 59 to 87 (LTGQRGSRDSTGATGGNAPAGSGAGAPPP) are disordered. The segment covering 68 to 79 (STGATGGNAPAG) has biased composition (low complexity). Residues 120 to 126 (IGGGSAG), 143 to 147 (LDFVK), 159 to 170 (GGTCVNVGCIPK), 233 to 235 (GLG), 262 to 266 (AVGGR), Ser-282, Phe-286, and Tyr-302 each bind FAD. Cys-162 and Cys-167 are disulfide-bonded. Residues 322–328 (VRSIVLR) and Pro-355 each bind NADP(+). FAD-binding positions include 392 to 399 (RKGLVDDL), 429 to 432 (VGDI), 438 to 443 (ELTPVA), and Phe-472. Residue His-569 is the Proton acceptor of the active site. Pro-570 serves as a coordination point for FAD. Cysteines 594 and 595 form a disulfide.

The protein belongs to the class-I pyridine nucleotide-disulfide oxidoreductase family. In terms of assembly, homodimer. It depends on FAD as a cofactor. As to expression, during embryogenesis, expression is seen in germ cell progenitors, developing midgut, hindgut and proventriculus.

It localises to the mitochondrion. Its subcellular location is the cytoplasm. It carries out the reaction [thioredoxin]-dithiol + NADP(+) = [thioredoxin]-disulfide + NADPH + H(+). Functionally, thioredoxin system is a major player in glutathione metabolism, due to the demonstrated absence of a glutathione reductase. Functionally interacts with the Sod/Cat reactive oxidation species (ROS) defense system and thereby has a role in preadult development and life span. Lack of a glutathione reductase suggests antioxidant defense in Drosophila, and probably in related insects, differs fundamentally from that in other organisms. The polypeptide is Thioredoxin reductase 1, mitochondrial (Drosophila melanogaster (Fruit fly)).